The chain runs to 362 residues: Probable dual-specificity RNA methyltransferase RlmN (362 aa).

Residue glutamate 105 is the Proton acceptor of the active site. The region spanning 111–344 (HEYGNSICVT…VTIRREQGHD (234 aa)) is the Radical SAM core domain. A disulfide bridge connects residues cysteine 118 and cysteine 349. [4Fe-4S] cluster is bound by residues cysteine 125, cysteine 129, and cysteine 132. Residues 175 to 176 (GE), serine 207, 230 to 232 (SLH), and asparagine 306 contribute to the S-adenosyl-L-methionine site. Cysteine 349 serves as the catalytic S-methylcysteine intermediate.

This sequence belongs to the radical SAM superfamily. RlmN family. The cofactor is [4Fe-4S] cluster.

The protein resides in the cytoplasm. It carries out the reaction adenosine(2503) in 23S rRNA + 2 reduced [2Fe-2S]-[ferredoxin] + 2 S-adenosyl-L-methionine = 2-methyladenosine(2503) in 23S rRNA + 5'-deoxyadenosine + L-methionine + 2 oxidized [2Fe-2S]-[ferredoxin] + S-adenosyl-L-homocysteine. The catalysed reaction is adenosine(37) in tRNA + 2 reduced [2Fe-2S]-[ferredoxin] + 2 S-adenosyl-L-methionine = 2-methyladenosine(37) in tRNA + 5'-deoxyadenosine + L-methionine + 2 oxidized [2Fe-2S]-[ferredoxin] + S-adenosyl-L-homocysteine. In terms of biological role, specifically methylates position 2 of adenine 2503 in 23S rRNA and position 2 of adenine 37 in tRNAs. This chain is Probable dual-specificity RNA methyltransferase RlmN, found in Bacillus mycoides (strain KBAB4) (Bacillus weihenstephanensis).